A 262-amino-acid chain; its full sequence is Aminoglycoside (3'') (9) adenylyltransferase (262 aa).

The catalysed reaction is streptomycin + ATP = 3''-O-adenylylstreptomycin + diphosphate. It catalyses the reaction spectinomycin + ATP = 9-O-adenylylspectinomycin + diphosphate. Functionally, mediates bacterial resistance to the antibiotics streptomycin and spectinomycin. In Shigella flexneri, this protein is Aminoglycoside (3'') (9) adenylyltransferase.